The chain runs to 276 residues: 3-methyl-2-oxobutanoate hydroxymethyltransferase (276 aa).

Asp50 and Asp89 together coordinate Mg(2+). Residues 50–51, Asp89, and Lys119 contribute to the 3-methyl-2-oxobutanoate site; that span reads DS. Glu121 serves as a coordination point for Mg(2+). The active-site Proton acceptor is Glu188.

The protein belongs to the PanB family. In terms of assembly, homodecamer; pentamer of dimers. It depends on Mg(2+) as a cofactor.

The protein resides in the cytoplasm. The enzyme catalyses 3-methyl-2-oxobutanoate + (6R)-5,10-methylene-5,6,7,8-tetrahydrofolate + H2O = 2-dehydropantoate + (6S)-5,6,7,8-tetrahydrofolate. The protein operates within cofactor biosynthesis; (R)-pantothenate biosynthesis; (R)-pantoate from 3-methyl-2-oxobutanoate: step 1/2. Functionally, catalyzes the reversible reaction in which hydroxymethyl group from 5,10-methylenetetrahydrofolate is transferred onto alpha-ketoisovalerate to form ketopantoate. The sequence is that of 3-methyl-2-oxobutanoate hydroxymethyltransferase from Paracoccus denitrificans (strain Pd 1222).